We begin with the raw amino-acid sequence, 139 residues long: FAD synthase (139 aa).

Residues 9–10 (TF), 14–17 (HPGH), and Asn-92 contribute to the ATP site.

The protein belongs to the archaeal FAD synthase family. In terms of assembly, homodimer. A divalent metal cation is required as a cofactor.

It carries out the reaction FMN + ATP + H(+) = FAD + diphosphate. The protein operates within cofactor biosynthesis; FAD biosynthesis; FAD from FMN: step 1/1. Catalyzes the transfer of the AMP portion of ATP to flavin mononucleotide (FMN) to produce flavin adenine dinucleotide (FAD) coenzyme. The chain is FAD synthase from Methanocella paludicola (strain DSM 17711 / JCM 13418 / NBRC 101707 / SANAE).